The following is a 266-amino-acid chain: GTP cyclohydrolase FolE2 (266 aa).

Belongs to the GTP cyclohydrolase IV family.

The catalysed reaction is GTP + H2O = 7,8-dihydroneopterin 3'-triphosphate + formate + H(+). It functions in the pathway cofactor biosynthesis; 7,8-dihydroneopterin triphosphate biosynthesis; 7,8-dihydroneopterin triphosphate from GTP: step 1/1. In terms of biological role, converts GTP to 7,8-dihydroneopterin triphosphate. The chain is GTP cyclohydrolase FolE2 from Burkholderia mallei (strain ATCC 23344).